The sequence spans 688 residues: DNA ligase (688 aa).

Residues 38 to 42 (DEEYD), 87 to 88 (SL), and Glu-118 contribute to the NAD(+) site. Lys-120 acts as the N6-AMP-lysine intermediate in catalysis. NAD(+) is bound by residues Arg-141, Glu-175, Lys-291, and Lys-315. Positions 409, 412, 428, and 433 each coordinate Zn(2+). Residues 590–679 (MKLDILKGLT…AELKGYNFDE (90 aa)) form the BRCT domain.

Belongs to the NAD-dependent DNA ligase family. LigA subfamily. Mg(2+) is required as a cofactor. The cofactor is Mn(2+).

It catalyses the reaction NAD(+) + (deoxyribonucleotide)n-3'-hydroxyl + 5'-phospho-(deoxyribonucleotide)m = (deoxyribonucleotide)n+m + AMP + beta-nicotinamide D-nucleotide.. DNA ligase that catalyzes the formation of phosphodiester linkages between 5'-phosphoryl and 3'-hydroxyl groups in double-stranded DNA using NAD as a coenzyme and as the energy source for the reaction. It is essential for DNA replication and repair of damaged DNA. This is DNA ligase from Thermotoga petrophila (strain ATCC BAA-488 / DSM 13995 / JCM 10881 / RKU-1).